Here is a 221-residue protein sequence, read N- to C-terminus: RNA pyrophosphohydrolase (221 aa).

The 144-residue stretch at 6 to 149 (GFRPNVGIVL…KRSVYALALT (144 aa)) folds into the Nudix hydrolase domain. The short motif at 38 to 59 (GGIDRGETPEQAMFRELHEEVG) is the Nudix box element.

Belongs to the Nudix hydrolase family. RppH subfamily. Requires a divalent metal cation as cofactor.

Accelerates the degradation of transcripts by removing pyrophosphate from the 5'-end of triphosphorylated RNA, leading to a more labile monophosphorylated state that can stimulate subsequent ribonuclease cleavage. The chain is RNA pyrophosphohydrolase from Verminephrobacter eiseniae (strain EF01-2).